The primary structure comprises 300 residues: Cis-3-alkyl-4-alkyloxetan-2-one decarboxylase (300 aa).

Positions 33–282 (VVVMLHGNPS…DDANHYVLED (250 aa)) constitute an AB hydrolase-1 domain.

This sequence belongs to the AB hydrolase superfamily. As to quaternary structure, homotetramer. Forms a complex with OleC and OleD.

It is found in the cytoplasm. It carries out the reaction a cis-3-alkyl-4-alkyloxetan-2-one = a cis-alkene + CO2. Its function is as follows. Involved in olefin biosynthesis. Catalyzes the elimination of carbon dioxide from beta-lactones to form the final olefin product. The polypeptide is Cis-3-alkyl-4-alkyloxetan-2-one decarboxylase (Xanthomonas campestris pv. campestris (strain ATCC 33913 / DSM 3586 / NCPPB 528 / LMG 568 / P 25)).